We begin with the raw amino-acid sequence, 640 residues long: MQYDIIVIGGGHAGIEACLAAARMGAKTLLITILAEQIGAASCNPAIGGLAKGHLVKEIDALGGQMGVCTDFAGIQFRTLNESKGPAVRGSRAQIDMDRYRIFMRNVLLNTSNLNISQEIATEILTENDQITGVKTHLGNVYETNRLIITTGTFLNGLIHVGENKLSAGRVGEFPSIRLSQSLKNLGLKMGRLKTGTCPRVDAKTIDFSALELQNGDAQAHPFSFKTRFFANEIEKFTKNLSKNFDENGNFNPTQIPCYITYTNEKTHEIIRNNFDRAPLFTGQIHGIGPRYCPSIEDKINKFADRDRHHVFVEPQTAEASEYYLNGLSTSLPYDVQVEFLHSVKGFENAKIVRHGYAIEYDFVEPTELKHSLETKKINGLYLAGQINGTTGYEEAAAQGLIAGINAALDIQNKAPLILRRDEAYIGVLIDDLVTKGTKEPYRMFTSRAEFRLLLREDNAIFRLSGYGHDIGLIKDYEFDEISRRKAQIQKGINFLLNNVITPNKENLAKLKSLGADAISQNTTWQKIVGGKNFSAEKIREIDSMFVDFSDDELSEILTECKYYFYIQMQKDEVAKMKNMLNTKIPTELDFSKISGLSNEIIEKLNKFNPPTLFAASEISGVTPAAIDILHIYIKQFKGK.

Glycine 9–glycine 14 contributes to the FAD binding site. Glycine 289–phenylalanine 303 contributes to the NAD(+) binding site.

It belongs to the MnmG family. In terms of assembly, homodimer. Heterotetramer of two MnmE and two MnmG subunits. The cofactor is FAD.

The protein localises to the cytoplasm. NAD-binding protein involved in the addition of a carboxymethylaminomethyl (cmnm) group at the wobble position (U34) of certain tRNAs, forming tRNA-cmnm(5)s(2)U34. This Campylobacter hominis (strain ATCC BAA-381 / DSM 21671 / CCUG 45161 / LMG 19568 / NCTC 13146 / CH001A) protein is tRNA uridine 5-carboxymethylaminomethyl modification enzyme MnmG.